A 537-amino-acid polypeptide reads, in one-letter code: Synaptotagmin-2 (537 aa).

Residues methionine 1–glycine 2 lie on the Cytoplasmic side of the membrane. A helical transmembrane segment spans residues isoleucine 3–isoleucine 23. The Lumenal portion of the chain corresponds to glycine 24–serine 537. One can recognise an SMP-LTD domain in the interval aspartate 67 to methionine 249. A phospholipid binding region spans residues glutamine 227–glycine 505. C2 domains lie at tryptophan 240 to leucine 362 and aspartate 402 to tyrosine 517. Residues aspartate 276, aspartate 282, aspartate 332, and glutamate 334 each contribute to the Ca(2+) site.

The protein belongs to the synaptotagmin family. Ca(2+) is required as a cofactor.

The protein localises to the golgi apparatus membrane. Functionally, may play an important role in regulating an unconventional protein trafficking from the cytosol to the extracellular matrix. The protein is Synaptotagmin-2 (SYT2) of Arabidopsis thaliana (Mouse-ear cress).